The primary structure comprises 259 residues: (3R)-3-hydroxyacyl-CoA dehydrogenase (259 aa).

NAD(+) is bound by residues 13–21 and 40–41; these read LVTGAGSGI and DL. Ser-58 is modified (phosphoserine). Position 66 is an N6-acetyllysine (Lys-66). Residue 72–74 coordinates NAD(+); sequence ADV. Ser-154 is a substrate binding site. Lys-158 is subject to N6-succinyllysine. Tyr-167 functions as the Proton acceptor in the catalytic mechanism. NAD(+)-binding positions include 167-171 and 200-202; these read YASSK and IAT. The residue at position 171 (Lys-171) is an N6-succinyllysine.

This sequence belongs to the short-chain dehydrogenases/reductases (SDR) family. Heterotetramer with CBR4; contains two molecules of HSD17B8 and CBR4. In terms of tissue distribution, kidney, liver, testis, ovary and spleen. Oviduct, uterus, mammary gland, vagina, prostate, clitoral gland and moderately heart, dorsal skin, brain and lung.

Its subcellular location is the mitochondrion matrix. It carries out the reaction a (3R)-3-hydroxyacyl-CoA + NAD(+) = a 3-oxoacyl-CoA + NADH + H(+). The catalysed reaction is 17beta-estradiol + NAD(+) = estrone + NADH + H(+). The enzyme catalyses testosterone + NAD(+) = androst-4-ene-3,17-dione + NADH + H(+). It catalyses the reaction 17beta-hydroxy-5alpha-androstan-3-one + NAD(+) = 5alpha-androstan-3,17-dione + NADH + H(+). It functions in the pathway lipid metabolism; fatty acid biosynthesis. The protein operates within steroid biosynthesis; estrogen biosynthesis. Its pathway is lipid metabolism; mitochondrial fatty acid beta-oxidation. Required for the solubility and assembly of the heterotetramer 3-ketoacyl-[acyl carrier protein] (ACP) reductase functional complex (KAR or KAR1) that forms part of the mitochondrial fatty acid synthase (mtFAS). Alpha-subunit of the KAR complex, acts as scaffold protein, required for the stability of carbonyl reductase type-4 (CBR4, beta-subunit of the KAR complex) and for its 3-ketoacyl-ACP reductase activity, thereby participating in mitochondrial fatty acid biosynthesis. Catalyzes the NAD-dependent conversion of (3R)-3-hydroxyacyl-CoA into 3-ketoacyl-CoA (3-oxoacyl-CoA) with no chain length preference, this enzymatic activity is not needed for the KAR function. Prefers (3R)-3-hydroxyacyl-CoA over (3S)-3-hydroxyacyl-CoA and displays enzymatic activity only in the presence of NAD(+)(H). Cooperates with enoyl-CoA hydratase 1 in mitochondria, together they constitute an alternative route to the auxiliary enzyme pathways for the breakdown of Z-PUFA (cis polyunsaturated fatty acid) enoyl-esters. NAD-dependent 17-beta-hydroxysteroid dehydrogenase with highest activity towards estradiol. It efficiently catalyzes the oxidation of estradiol (E2), testosterone, and dihydrotestosterone. Primarily an oxidative enzyme, it can switch to a reductive mode determined in the appropriate physiologic milieu and catalyze the reduction of estrone (E1) to form biologically active estradiol (E2). This chain is (3R)-3-hydroxyacyl-CoA dehydrogenase (Hsd17b8), found in Mus musculus (Mouse).